Here is a 462-residue protein sequence, read N- to C-terminus: Serine carboxypeptidase-like 28 (462 aa).

The first 26 residues, 1–26 (MMITKKLYQCMCLLCMVIALLDVVSS), serve as a signal peptide directing secretion. 2 N-linked (GlcNAc...) asparagine glycosylation sites follow: asparagine 49 and asparagine 144. 3 disulfide bridges follow: cysteine 93–cysteine 342, cysteine 254–cysteine 266, and cysteine 290–cysteine 311. The active site involves serine 186. N-linked (GlcNAc...) asparagine glycosylation is present at asparagine 256. A glycan (N-linked (GlcNAc...) asparagine) is linked at asparagine 334. Active-site residues include aspartate 379 and histidine 434. The N-linked (GlcNAc...) asparagine glycan is linked to asparagine 454.

It belongs to the peptidase S10 family. As to expression, expressed in seedlings, roots and senescent leaves.

The protein localises to the secreted. In terms of biological role, probable carboxypeptidase. The protein is Serine carboxypeptidase-like 28 (SCPL28) of Arabidopsis thaliana (Mouse-ear cress).